Consider the following 495-residue polypeptide: Glutamate--tRNA ligase 1 (495 aa).

The 'HIGH' region motif lies at 10–20 (PSPTGALHMGG). The short motif at 251 to 255 (KLSKR) is the 'KMSKS' region element. Lys-254 lines the ATP pocket.

The protein belongs to the class-I aminoacyl-tRNA synthetase family. Glutamate--tRNA ligase type 1 subfamily. In terms of assembly, monomer.

The protein localises to the cytoplasm. The catalysed reaction is tRNA(Glu) + L-glutamate + ATP = L-glutamyl-tRNA(Glu) + AMP + diphosphate. Catalyzes the attachment of glutamate to tRNA(Glu) in a two-step reaction: glutamate is first activated by ATP to form Glu-AMP and then transferred to the acceptor end of tRNA(Glu). This Syntrophomonas wolfei subsp. wolfei (strain DSM 2245B / Goettingen) protein is Glutamate--tRNA ligase 1.